A 155-amino-acid polypeptide reads, in one-letter code: Peptidyl-prolyl cis-trans isomerase ppi1 (155 aa).

Residues 1-154 (MANVELQTSL…EPLKIIKAVA (154 aa)) enclose the PPIase cyclophilin-type domain.

The protein belongs to the cyclophilin-type PPIase family. PPIL1 subfamily. As to quaternary structure, interacts with cwf13/snw1.

The catalysed reaction is [protein]-peptidylproline (omega=180) = [protein]-peptidylproline (omega=0). PPIases accelerate the folding of proteins. It catalyzes the cis-trans isomerization of proline imidic peptide bonds in oligopeptides. This chain is Peptidyl-prolyl cis-trans isomerase ppi1 (ppi1), found in Schizosaccharomyces pombe (strain 972 / ATCC 24843) (Fission yeast).